A 379-amino-acid polypeptide reads, in one-letter code: Cytochrome b (379 aa).

The next 4 membrane-spanning stretches (helical) occupy residues 33-53, 77-98, 113-133, and 178-198; these read FGSL…FLAM, WLIR…FIHV, WNIG…GYVL, and FFAF…VHLL. Heme b-binding residues include His83 and His97. Residues His182 and His196 each contribute to the heme b site. Position 201 (His201) interacts with a ubiquinone. The next 4 helical transmembrane spans lie at 226–246, 288–308, 320–340, and 347–367; these read IKDL…ALFF, LGGV…PLLN, ITQT…WIGG, and FTMX…ILMP.

This sequence belongs to the cytochrome b family. The cytochrome bc1 complex contains 11 subunits: 3 respiratory subunits (MT-CYB, CYC1 and UQCRFS1), 2 core proteins (UQCRC1 and UQCRC2) and 6 low-molecular weight proteins (UQCRH/QCR6, UQCRB/QCR7, UQCRQ/QCR8, UQCR10/QCR9, UQCR11/QCR10 and a cleavage product of UQCRFS1). This cytochrome bc1 complex then forms a dimer. Heme b is required as a cofactor.

The protein resides in the mitochondrion inner membrane. Component of the ubiquinol-cytochrome c reductase complex (complex III or cytochrome b-c1 complex) that is part of the mitochondrial respiratory chain. The b-c1 complex mediates electron transfer from ubiquinol to cytochrome c. Contributes to the generation of a proton gradient across the mitochondrial membrane that is then used for ATP synthesis. The chain is Cytochrome b (MT-CYB) from Necromys amoenus (Pleasant bolo mouse).